The chain runs to 429 residues: Small ribosomal subunit protein uS5m (429 aa).

A disordered region spans residues 108-127 (AGAKKGRGKRTKKKKRKDLN). Residues 111 to 125 (KKGRGKRTKKKKRKD) show a composition bias toward basic residues. Residues 218-282 (FDTRILEVRN…NRAVHHLYYI (65 aa)) form the S5 DRBM domain.

The protein belongs to the universal ribosomal protein uS5 family. As to quaternary structure, component of the mitochondrial ribosome small subunit (28S) which comprises a 12S rRNA and about 30 distinct proteins.

It is found in the mitochondrion. This is Small ribosomal subunit protein uS5m (MRPS5) from Pongo abelii (Sumatran orangutan).